The sequence spans 551 residues: Intestinal-type alkaline phosphatase 2 (551 aa).

Residues 1–19 form the signal peptide; the sequence is MQGAWVLLLLGFRLQLSLS. D61 lines the Mg(2+) pocket. Residues D61 and S111 each coordinate Zn(2+). Catalysis depends on S111, which acts as the Phosphoserine intermediate. C140 and C202 are joined by a disulfide. A glycan (N-linked (GlcNAc...) asparagine) is linked at N141. S174 provides a ligand contact to Mg(2+). A Ca(2+)-binding site is contributed by E235. N241 is a glycosylation site (N-linked (GlcNAc...) asparagine). Positions 288, 289, and 304 each coordinate Ca(2+). Mg(2+) is bound at residue E330. Positions 335, 339, 376, and 377 each coordinate Zn(2+). N-linked (GlcNAc...) asparagine glycosylation occurs at N426. Residues C485 and C492 are joined by a disulfide bond. Positions 496-537 are disordered; that stretch reads PPADENRPTTPVQNSTTTTTTTTTTTTTTTTTRVQNSASSLG. A glycan (N-linked (GlcNAc...) asparagine) is linked at N509. The segment covering 511 to 527 has biased composition (low complexity); that stretch reads TTTTTTTTTTTTTTTTT. A compositionally biased stretch (polar residues) spans 528–537; the sequence is RVQNSASSLG. N531 carries the GPI-anchor amidated asparagine lipid modification. Positions 532–551 are cleaved as a propeptide — removed in mature form; that stretch reads SASSLGPATAPLAWHYWPRR.

It belongs to the alkaline phosphatase family. As to quaternary structure, homodimer. The cofactor is Mg(2+). Requires Zn(2+) as cofactor. Ca(2+) is required as a cofactor.

It localises to the cell membrane. It carries out the reaction a phosphate monoester + H2O = an alcohol + phosphate. Alkaline phosphatase that can hydrolyze various phosphate compounds. This chain is Intestinal-type alkaline phosphatase 2, found in Rattus norvegicus (Rat).